Reading from the N-terminus, the 870-residue chain is Ubiquitin-protein ligase E3A (870 aa).

S8 is modified (phosphoserine). Residues 42–81 form a C4-type; atypical zinc finger; that stretch reads CGNEACTNEFCASCPTFLRMDNNAAAIKALELYKINAKLC. Basic and acidic residues predominate over residues 171–180; that stretch reads EELKSLQEKD. Residues 171 to 223 form a disordered region; the sequence is EELKSLQEKDEDKDEDEKEKAACSAAAMEEDSEASSSRMGDSSQGDNNVQKLG. Residues 208–220 are compositionally biased toward polar residues; it reads RMGDSSQGDNNVQ. A Phosphoserine modification is found at S213. The HECT domain maps to 542-870; the sequence is NPADLKKQLY…ITYAKGFGML (329 aa). Y654 carries the post-translational modification Phosphotyrosine; by ABL1. C838 serves as the catalytic Glycyl thioester intermediate.

The active form is probably a homotrimer. Binds UBQLN1 and UBQLN2. Interacts with the 26S proteasome. Interacts with BPY2. Interacts with HIF1AN, MAPK6 and NEURL4; interaction with MAPK6 may be mediated by NEURL4. Interacts with the proteasomal subunit PSMD4. Interacts with BMAL1. Interacts with ARC. Interacts with ESR1 and WBP2. Phosphorylation at Tyr-654 by ABL1 impairs E3 ligase activity. As to expression, widely expressed. Most abundant in brain, heart and thymus.

The protein resides in the cytoplasm. The protein localises to the nucleus. It carries out the reaction S-ubiquitinyl-[E2 ubiquitin-conjugating enzyme]-L-cysteine + [acceptor protein]-L-lysine = [E2 ubiquitin-conjugating enzyme]-L-cysteine + N(6)-ubiquitinyl-[acceptor protein]-L-lysine.. It functions in the pathway protein modification; protein ubiquitination. Functionally, E3 ubiquitin-protein ligase which accepts ubiquitin from an E2 ubiquitin-conjugating enzyme in the form of a thioester and transfers it to its substrates. Several substrates have been identified including the BMAL1, ARC, LAMTOR1, RAD23A and RAD23B, MCM7 (which is involved in DNA replication), annexin A1, the PML tumor suppressor, and the cell cycle regulator CDKN1B. Additionally, may function as a cellular quality control ubiquitin ligase by helping the degradation of the cytoplasmic misfolded proteins. Finally, UBE3A also promotes its own degradation in vivo. Plays an important role in the regulation of the circadian clock: involved in the ubiquitination of the core clock component BMAL1, leading to its proteasomal degradation. Acts as a regulator of synaptic development by mediating ubiquitination and degradation of ARC. Required for synaptic remodeling in neurons by mediating ubiquitination and degradation of LAMTOR1, thereby limiting mTORC1 signaling and activity-dependent synaptic remodeling. Synergizes with WBP2 in enhancing PGR activity. In Mus musculus (Mouse), this protein is Ubiquitin-protein ligase E3A.